Consider the following 218-residue polypeptide: NAD(P)H-hydrate epimerase (218 aa).

The 207-residue stretch at 9–215 (MKKIDQYAID…DIGIPQKAIR (207 aa)) folds into the YjeF N-terminal domain. A (6S)-NADPHX-binding site is contributed by 55–59 (NNGAD). K(+) is bound by residues Asn56 and Asp127. (6S)-NADPHX contacts are provided by residues 131 to 137 (GTGLNRT) and Asp160. A K(+)-binding site is contributed by Ser163.

The protein belongs to the NnrE/AIBP family. Requires K(+) as cofactor.

The enzyme catalyses (6R)-NADHX = (6S)-NADHX. It catalyses the reaction (6R)-NADPHX = (6S)-NADPHX. Functionally, catalyzes the epimerization of the S- and R-forms of NAD(P)HX, a damaged form of NAD(P)H that is a result of enzymatic or heat-dependent hydration. This is a prerequisite for the S-specific NAD(P)H-hydrate dehydratase to allow the repair of both epimers of NAD(P)HX. This is NAD(P)H-hydrate epimerase from Anaerococcus prevotii (strain ATCC 9321 / DSM 20548 / JCM 6508 / NCTC 11806 / PC1) (Peptostreptococcus prevotii).